Here is a 735-residue protein sequence, read N- to C-terminus: Protein argonaute (735 aa).

The tract at residues 1–94 is N-terminal domain; it reads MDLLSNLRRS…LVQMGTKQLD (94 aa). Residues 95-180 are linker L1; the sequence is CRNDAHRCAL…IDIHHRFYTP (86 aa). Residues 181-284 are PAZ domain; the sequence is WTVHQWLEQY…SPSLTMEMLA (104 aa). Residues 285–369 are linker L2; it reads KVAEDSTVCD…SKTADIRNKG (85 aa). The segment at 370-498 is mid domain; that stretch reads CAKIGETSFG…LLCKAGWQPI (129 aa). Residues 499-735 are PIWI domain; that stretch reads QLESVDHPEV…NISRDKLIAV (237 aa). Active-site residues include Asp516, Glu550, Asp584, and Asp709. Position 516 (Asp516) interacts with Mn(2+). Mn(2+) is bound by residues Asp584, Asp709, and Val735.

It belongs to the argonaute family. Long pAgo subfamily. As to quaternary structure, copurifies with SSB proteins Synpcc7942_0079 and Synpcc7942_0301 as well as other proteins. Requires Mn(2+) as cofactor.

A DNA-guided ssDNA endonuclease that might play a role in defense against invading mobile genetic elements. Uses short ssDNA sequences as guides (gDNA) to bind complementary target strands, resulting in cleavage of the target DNA (tDNA). The cleavage site is 10 nucleotides (nt) downstream of the target residue base-paired with the 5'-end of the gDNA. Both 5'-P and 5'-OH gDNAs confer activity; a 5'-OH guide cleaves between nt 10-11 and nt 11-12. Guide DNA mismatches in the seed (nt 2-9) can enhance activity, mismatches 1-5 nt after the cleavage site block activity. Has no appreciable activity with guide RNA or on target RNA. In situ binds to 5'-phosphorylated DNA 14-20 nt in length; small DNA maps over the chromosome and plasmid with some preference for the replication origin and the probable termination site. Also has weak guide-independent nuclease activity on DNA called 'chopping'. Overexpression of wild-type or catalytically inactive mutant has no visible effect during growth under continuous high light for up to a month. In Synechococcus elongatus (strain ATCC 33912 / PCC 7942 / FACHB-805) (Anacystis nidulans R2), this protein is Protein argonaute.